The following is a 182-amino-acid chain: Adenine phosphoribosyltransferase (182 aa).

It belongs to the purine/pyrimidine phosphoribosyltransferase family. In terms of assembly, homodimer.

The protein resides in the cytoplasm. The enzyme catalyses AMP + diphosphate = 5-phospho-alpha-D-ribose 1-diphosphate + adenine. The protein operates within purine metabolism; AMP biosynthesis via salvage pathway; AMP from adenine: step 1/1. In terms of biological role, catalyzes a salvage reaction resulting in the formation of AMP, that is energically less costly than de novo synthesis. In Streptomyces galbus, this protein is Adenine phosphoribosyltransferase.